The following is a 345-amino-acid chain: S-adenosylmethionine:tRNA ribosyltransferase-isomerase (345 aa).

Belongs to the QueA family. Monomer.

The protein resides in the cytoplasm. The catalysed reaction is 7-aminomethyl-7-carbaguanosine(34) in tRNA + S-adenosyl-L-methionine = epoxyqueuosine(34) in tRNA + adenine + L-methionine + 2 H(+). It participates in tRNA modification; tRNA-queuosine biosynthesis. Transfers and isomerizes the ribose moiety from AdoMet to the 7-aminomethyl group of 7-deazaguanine (preQ1-tRNA) to give epoxyqueuosine (oQ-tRNA). This is S-adenosylmethionine:tRNA ribosyltransferase-isomerase from Thermodesulfovibrio yellowstonii (strain ATCC 51303 / DSM 11347 / YP87).